The primary structure comprises 343 residues: Cyclic AMP-AMP-AMP synthase (343 aa).

Belongs to the CD-NTase family. D01 subfamily. Mg(2+) serves as cofactor.

The catalysed reaction is 3 ATP = 2',3',3'-c-tri-AMP + 3 diphosphate. Its function is as follows. Cyclic nucleotide synthase (second messenger synthase) of a CBASS antivirus system. CBASS (cyclic oligonucleotide-based antiphage signaling system) provides immunity against bacteriophage. The CD-NTase protein synthesizes cyclic nucleotides in response to infection; these serve as specific second messenger signals. The signals activate a diverse range of effectors, leading to bacterial cell death and thus abortive phage infection. A type II-C(AAAA) CBASS system. Functionally, cyclic trinucleotide synthase that catalyzes the synthesis of 2',3',3'-cyclic AMP-AMP-AMP (2',3',3'-c-tri-AMP or 2'3'3'-cAAA) as the major product, as well as another cyclic AMP(4) 2'-5'-linked minor product that acts as a second messenger for cell signal transduction. This Acinetobacter sp. (strain ATCC 27244 / 9458) protein is Cyclic AMP-AMP-AMP synthase.